We begin with the raw amino-acid sequence, 128 residues long: Small ribosomal subunit protein uS14m (128 aa).

The protein belongs to the universal ribosomal protein uS14 family. As to quaternary structure, component of the mitochondrial small ribosomal subunit (mt-SSU). Mature mammalian 55S mitochondrial ribosomes consist of a small (28S) and a large (39S) subunit. The 28S small subunit contains a 12S ribosomal RNA (12S mt-rRNA) and 30 different proteins. The 39S large subunit contains a 16S rRNA (16S mt-rRNA), a copy of mitochondrial valine transfer RNA (mt-tRNA(Val)), which plays an integral structural role, and 52 different proteins. Interacts with LIAT1.

Its subcellular location is the mitochondrion. This chain is Small ribosomal subunit protein uS14m, found in Homo sapiens (Human).